Here is a 326-residue protein sequence, read N- to C-terminus: uncharacterized protein (326 aa).

A disordered region spans residues 293–326 (HRNYDANHSTSGEEENSGSRSRIAELSQSTIHRR).

This is an uncharacterized protein from Oryza latifolia (Indian wild rice).